The primary structure comprises 424 residues: Inhibin beta A chain (424 aa).

Positions 1–20 are cleaved as a signal peptide; sequence MPLLWLRGFLLASCWIIVRS. A propeptide spanning residues 21–308 is cleaved from the precursor; sequence SPTPGSEGHG…EDHPHRRRRR (288 aa). The N-linked (GlcNAc...) asparagine glycan is linked to asparagine 165. Basic and acidic residues predominate over residues 264-275; that stretch reads EVDGDGKKKDGS. Residues 264–306 form a disordered region; the sequence is EVDGDGKKKDGSDGGLEEEKEQSHRPFLMLQARQSEDHPHRRR. 4 disulfide bridges follow: cysteine 312–cysteine 320, cysteine 319–cysteine 389, cysteine 348–cysteine 421, and cysteine 352–cysteine 423.

It belongs to the TGF-beta family. Dimeric, linked by one or more disulfide bonds. Inhibin A is a dimer of alpha/INHA and beta-A/INHBA. Activin A is a homodimer of beta-A/INHBA. Activin AB is a dimer of beta-A/INHBA and beta-B/INHBB. Interacts with FST and FSTL3; these interactions prevent activin A interaction to its type II receptor. Activin A interacts with ACVR2A. Activin A interacts with BMPR2. Inhibin A interacts with ACVR1; this interaction creates a non-signaling complex (NSC) that inhibits ACVR1-mediated BMP signaling. Inhibin A interacts with ACVR2A.

It is found in the secreted. Its function is as follows. Inhibins/activins are involved in regulating a number of diverse functions such as hypothalamic and pituitary hormone secretion, gonadal hormone secretion, germ cell development and maturation, erythroid differentiation, insulin secretion, nerve cell survival, embryonic axial development or bone growth, depending on their subunit composition. Functionally, activin A is a homodimer of INHBA that plays a role in several essential biological processes including embryonic development, stem cell maintenance and differentiation, haematopoiesis, cell proliferation and tissue fibrosis. Signals through type I (such as ACVR1B or ACVR1C) and type II receptors (such as ACVR2A, ACVR2B or BMPR2) which, upon ligand binding, phosphorylate SMAD2 and SMAD3 intracellular signaling mediators that form a complex with SMAD4, translocate to the nucleus and modulate gene expression. Can also activate alternative non-canonical intracellular signaling pathways including the p38 MAPK, extracellular signal-regulated kinases 1/2 (ERK1/2) and c-Jun N-terminal kinases (JNKs) to modulate cell migration and differentiation. Alternatively, promotes osteoblastic differentiation via ACVRL1-SMAD1/5/9 pathway. In addition, can engage the type I receptor ACVR1 to form an ACVR1-activin A-type II receptor non-signaling complex (NSC) that renders receptors unavailable for engagement with BMPs, hence resulting in an apparent inhibition of ACVR1-mediated BMP signaling. Inhibin A is a dimer of alpha/INHA and beta-A/INHBA that functions as a feedback regulator in the hypothalamic-pituitary-gonadal (HPG) axis. Inhibits the secretion of FSH from the anterior pituitary gland by acting on pituitary gonadotrope cells. Antagonizes activin A by binding to the proteoglycan, betaglycan, and forming a stable complex with and, thereby, sequestering type II activin receptors while excluding type I receptor. The polypeptide is Inhibin beta A chain (Inhba) (Rattus norvegicus (Rat)).